Consider the following 314-residue polypeptide: Very long chain fatty acid elongase 4 (314 aa).

The N-linked (GlcNAc...) asparagine glycan is linked to N20. A run of 7 helical transmembrane segments spans residues 42–62 (LMQS…FVWL), 78–98 (VLII…RELF), 127–147 (ALWW…FFIL), 165–185 (MFTL…FFGA), 188–208 (NSFI…GPWI), 217–237 (YLTM…ALSL), and 247–267 (MHWA…NFYI). Residues 275–314 (KPKAGKTAMNGISANGVSKSEKQLMIENGKKQKNGKAKGD) form a disordered region. The span at 293 to 304 (KSEKQLMIENGK) shows a compositional bias: basic and acidic residues. Residues 305–314 (KQKNGKAKGD) are compositionally biased toward basic residues. The short motif at 310–314 (KAKGD) is the Di-lysine motif element.

The protein belongs to the ELO family. ELOVL4 subfamily. In terms of assembly, oligomer. Post-translationally, N-glycosylated. Expressed in the retina and at much lower level in the brain. Ubiquitous, highest expression in thymus, followed by testis, small intestine, ovary, and prostate. Little or no expression in heart, lung, liver, or leukocates.

It is found in the endoplasmic reticulum membrane. The enzyme catalyses a very-long-chain acyl-CoA + malonyl-CoA + H(+) = a very-long-chain 3-oxoacyl-CoA + CO2 + CoA. It catalyses the reaction tetracosanoyl-CoA + malonyl-CoA + H(+) = 3-oxohexacosanoyl-CoA + CO2 + CoA. The catalysed reaction is hexacosanoyl-CoA + malonyl-CoA + H(+) = 3-oxooctacosanyol-CoA + CO2 + CoA. It carries out the reaction octacosanoyl-CoA + malonyl-CoA + H(+) = 3-oxo-triacontanoyl-CoA + CO2 + CoA. The enzyme catalyses triacontanoyl-CoA + malonyl-CoA + H(+) = 3-oxo-dotriacontanoyl-CoA + CO2 + CoA. It catalyses the reaction (19Z,22Z,25Z,28Z,31Z)-tetratriacontapentaenoyl-CoA + malonyl-CoA + H(+) = 3-oxo-(21Z,24Z,27Z,30Z,33Z)-hexatriacontapentaenoyl-CoA + CO2 + CoA. The catalysed reaction is (4Z,7Z,10Z,13Z,16Z,19Z)-docosahexaenoyl-CoA + malonyl-CoA + H(+) = 3-oxo-(6Z,9Z,12Z,15Z,18Z,21Z)-tetracosahexaenoyl-CoA + CO2 + CoA. It carries out the reaction (7Z,10Z,13Z,16Z)-docosatetraenoyl-CoA + malonyl-CoA + H(+) = (9Z,12Z,15Z,18Z)-3-oxotetracosatetraenoyl-CoA + CO2 + CoA. The enzyme catalyses (11Z,14Z,17Z,20Z,23Z)-hexacosapentaenoyl-CoA + malonyl-CoA + H(+) = 3-oxo-(13Z,16Z,19Z,22Z,25Z)-octacosapentaenoyl-CoA + CO2 + CoA. It catalyses the reaction (13Z,16Z,19Z,22Z,25Z)-octacosapentaenoyl-CoA + malonyl-CoA + H(+) = 3-oxo-(15Z,18Z,21Z,24Z,27Z)-triacontapentaenoyl-CoA + CO2 + CoA. The catalysed reaction is (15Z,18Z,21Z,24Z,27Z)-triacontapentaenoyl-CoA + malonyl-CoA + H(+) = 3-oxo-(17Z,20Z,23Z,26Z,29Z)-dotriacontapentaenoyl-CoA + CO2 + CoA. It carries out the reaction (17Z,20Z,23Z,26Z,29Z)-dotriacontapentaenoyl-CoA + malonyl-CoA + H(+) = 3-oxo-(19Z,22Z,25Z,28Z,31Z)-tetratriacontapentaenoyl-CoA + CO2 + CoA. The enzyme catalyses (21Z,24Z,27Z,30Z,33Z)-hexatriacontapentaenoyl-CoA + malonyl-CoA + H(+) = 3-oxo-(23Z,26Z,29Z,32Z,35Z)-octatriacontapentaenoyl-CoA + CO2 + CoA. It catalyses the reaction (11Z,14Z,17Z,20Z)-hexacosatetraenoyl-CoA + malonyl-CoA + H(+) = (13Z,16Z,19Z,22Z)-3-oxooctacosatetraenoyl-CoA + CO2 + CoA. The catalysed reaction is (13Z,16Z,19Z,22Z)-octacosatetraenoyl-CoA + malonyl-CoA + H(+) = 3-oxo-(15Z,18Z,21Z,24Z)-triacontatetraenoyl-CoA + CO2 + CoA. It carries out the reaction (15Z,18Z,21Z,24Z)-triacontatetraenoyl-CoA + malonyl-CoA + H(+) = 3-oxo-(17Z,20Z,23Z,26Z)-dotriacontatetraenoyl-CoA + CO2 + CoA. The enzyme catalyses (17Z,20Z,23Z,26Z)-dotriacontatetraenoyl-CoA + malonyl-CoA + H(+) = 3-oxo-(19Z,22Z,25Z,28Z)-tetratriacontatetraenoyl-CoA + CO2 + CoA. It catalyses the reaction (19Z,22Z,25Z,28Z)-tetratriacontatetraenoyl-CoA + malonyl-CoA + H(+) = 3-oxo-(21Z,24Z,27Z,30Z)-hexatriacontatetraenoyl-CoA + CO2 + CoA. The catalysed reaction is (21Z,24Z,27Z,30Z)-hexatriacontatetraenoyl-CoA + malonyl-CoA + H(+) = 3-oxo-(23Z,26Z,29Z,32Z)-octatriacontatetraenoyl-CoA + CO2 + CoA. It carries out the reaction (6Z,9Z,12Z,15Z,18Z,21Z)-tetracosahexaenoyl-CoA + malonyl-CoA + H(+) = 3-oxo-(8Z,11Z,14Z,17Z,20Z,23Z)-hexacosahexaenoyl-CoA + CO2 + CoA. The enzyme catalyses (8Z,11Z,14Z,17Z,20Z,23Z)-hexacosahexaenoyl-CoA + malonyl-CoA + H(+) = 3-oxo-(10Z,13Z,16Z,19Z,22Z,25Z)-octacosahexaenoyl-CoA + CO2 + CoA. It catalyses the reaction (10Z,13Z,16Z,19Z,22Z,25Z)-octacosahexaenoyl-CoA + malonyl-CoA + H(+) = 3-oxo-(12Z,15Z,18Z,21Z,24Z,27Z)-triacontahexaenoyl-CoA + CO2 + CoA. The catalysed reaction is (12Z,15Z,18Z,21Z,24Z,27Z)-triacontahexaenoyl-CoA + malonyl-CoA + H(+) = 3-oxo-(14Z,17Z,20Z,23Z,26Z,29Z)-dotriacontahexaenoyl-CoA + CO2 + CoA. It carries out the reaction (14Z,17Z,20Z,23Z,26Z,29Z)-dotriacontahexaenoyl-CoA + malonyl-CoA + H(+) = 3-oxo-(16Z,19Z,22Z,25Z,28Z,31Z)-tetratriacontahexaenoyl-CoA + CO2 + CoA. The enzyme catalyses (16Z,19Z,22Z,25Z,28Z,31Z)-tetratriacontahexaenoyl-CoA + malonyl-CoA + H(+) = 3-oxo-(18Z,21Z,24Z,27Z,30Z,33Z)-hexatriacontahexaenoyl-CoA + CO2 + CoA. It catalyses the reaction (9Z,12Z,15Z,18Z,21Z)-tetracosapentaenoyl-CoA + malonyl-CoA + H(+) = 3-oxo-(11Z,14Z,17Z,20Z,23Z)-hexacosapentaenoyl-CoA + CO2 + CoA. It functions in the pathway lipid metabolism; fatty acid biosynthesis. In terms of biological role, catalyzes the first and rate-limiting reaction of the four reactions that constitute the long-chain fatty acids elongation cycle. This endoplasmic reticulum-bound enzymatic process allows the addition of 2 carbons to the chain of long- and very long-chain fatty acids (VLCFAs) per cycle. Condensing enzyme that catalyzes the synthesis of very long chain saturated (VLC-SFA) and polyunsaturated (PUFA) fatty acids that are involved in multiple biological processes as precursors of membrane lipids and lipid mediators. May play a critical role in early brain and skin development. The chain is Very long chain fatty acid elongase 4 from Homo sapiens (Human).